The sequence spans 597 residues: Elongation factor 4 (597 aa).

A tr-type G domain is found at 2 to 184 (KNIRNFSIIA…TVVQKIPAPK (183 aa)). GTP-binding positions include 14–19 (DHGKST) and 131–134 (NKID).

The protein belongs to the TRAFAC class translation factor GTPase superfamily. Classic translation factor GTPase family. LepA subfamily.

It is found in the cell inner membrane. It carries out the reaction GTP + H2O = GDP + phosphate + H(+). In terms of biological role, required for accurate and efficient protein synthesis under certain stress conditions. May act as a fidelity factor of the translation reaction, by catalyzing a one-codon backward translocation of tRNAs on improperly translocated ribosomes. Back-translocation proceeds from a post-translocation (POST) complex to a pre-translocation (PRE) complex, thus giving elongation factor G a second chance to translocate the tRNAs correctly. Binds to ribosomes in a GTP-dependent manner. In Laribacter hongkongensis (strain HLHK9), this protein is Elongation factor 4.